Reading from the N-terminus, the 249-residue chain is Aspartate/glutamate leucyltransferase (249 aa).

The protein belongs to the R-transferase family. Bpt subfamily.

The protein resides in the cytoplasm. The enzyme catalyses N-terminal L-glutamyl-[protein] + L-leucyl-tRNA(Leu) = N-terminal L-leucyl-L-glutamyl-[protein] + tRNA(Leu) + H(+). It catalyses the reaction N-terminal L-aspartyl-[protein] + L-leucyl-tRNA(Leu) = N-terminal L-leucyl-L-aspartyl-[protein] + tRNA(Leu) + H(+). In terms of biological role, functions in the N-end rule pathway of protein degradation where it conjugates Leu from its aminoacyl-tRNA to the N-termini of proteins containing an N-terminal aspartate or glutamate. The sequence is that of Aspartate/glutamate leucyltransferase from Brucella abortus (strain 2308).